A 409-amino-acid polypeptide reads, in one-letter code: Menaquinone reductase (409 aa).

Residues 11–15 (GAGPA), 44–47 (CGDG), Arg-101, Val-125, Asp-288, and 300–301 (GI) contribute to the FAD site.

The protein belongs to the geranylgeranyl reductase family. Requires FAD as cofactor.

It carries out the reaction menaquinone-9 + AH2 = beta-dihydromenaquinone-9 + A. Its pathway is quinol/quinone metabolism; menaquinone biosynthesis. Catalyzes the reduction of a single double bond in the isoprenoid tail of menaquinone (MK-9) in M.smegmatis, likely the beta-isoprene unit, forming the predominant form of menaquinone found in mycobacteria, MK-9(II-H2). The sequence is that of Menaquinone reductase from Mycolicibacterium smegmatis (strain ATCC 700084 / mc(2)155) (Mycobacterium smegmatis).